The sequence spans 375 residues: uncharacterized protein (375 aa).

This is an uncharacterized protein from Ureaplasma parvum serovar 3 (strain ATCC 700970).